Reading from the N-terminus, the 505-residue chain is Maturase K (505 aa).

This sequence belongs to the intron maturase 2 family. MatK subfamily.

It is found in the plastid. It localises to the chloroplast. Functionally, usually encoded in the trnK tRNA gene intron. Probably assists in splicing its own and other chloroplast group II introns. The polypeptide is Maturase K (Amaranthus greggii (Gregg's amaranth)).